The primary structure comprises 421 residues: Testin (421 aa).

The PET domain maps to 92-199 (MILTNPVAAK…GDVKLPCEMD (108 aa)). LIM zinc-binding domains lie at 234–297 (YSCY…CDSE), 299–359 (PRCA…NHAV), and 362–421 (QGCH…KRMS).

Belongs to the prickle / espinas / testin family. As to quaternary structure, interacts via LIM domain 1 with ZYX. Interacts (via LIM domain 3) with ENAH and VASP. Interacts with ALKBH4, talin, actin, alpha-actinin, GRIP1 and PXN. Interacts (via LIM domain 2) with ACTL7A (via N-terminus). Heterodimer with ACTL7A; the heterodimer interacts with ENAH to form a heterotrimer.

The protein resides in the cytoplasm. It localises to the cell junction. Its subcellular location is the focal adhesion. In terms of biological role, scaffold protein that may play a role in cell adhesion, cell spreading and in the reorganization of the actin cytoskeleton. Plays a role in the regulation of cell proliferation. May act as a tumor suppressor. This is Testin (TES) from Nomascus leucogenys (Northern white-cheeked gibbon).